We begin with the raw amino-acid sequence, 954 residues long: Leucine--tRNA ligase (954 aa).

The short motif at 40–51 is the 'HIGH' region element; the sequence is PYPSGAGLHVGH. The 'KMSKS' region signature appears at 729–733; the sequence is KMSKS. ATP is bound at residue Lys732.

This sequence belongs to the class-I aminoacyl-tRNA synthetase family.

The protein resides in the cytoplasm. The catalysed reaction is tRNA(Leu) + L-leucine + ATP = L-leucyl-tRNA(Leu) + AMP + diphosphate. The polypeptide is Leucine--tRNA ligase (Flavobacterium johnsoniae (strain ATCC 17061 / DSM 2064 / JCM 8514 / BCRC 14874 / CCUG 350202 / NBRC 14942 / NCIMB 11054 / UW101) (Cytophaga johnsonae)).